Consider the following 193-residue polypeptide: Bifunctional protein PyrR (193 aa).

Residues 57-58 (TR), Arg-98, 119-127 (DDVLYSGRS), Arg-152, and Val-176 each bind substrate. The PRPP-binding motif lies at 115–127 (VILVDDVLYSGRS).

It belongs to the purine/pyrimidine phosphoribosyltransferase family. PyrR subfamily.

It carries out the reaction UMP + diphosphate = 5-phospho-alpha-D-ribose 1-diphosphate + uracil. In terms of biological role, regulates the transcription of the pyrimidine nucleotide (pyr) operon in response to exogenous pyrimidines. Its function is as follows. Also displays a weak uracil phosphoribosyltransferase activity which is not physiologically significant. In Mycobacterium bovis (strain ATCC BAA-935 / AF2122/97), this protein is Bifunctional protein PyrR.